The sequence spans 110 residues: Insulin growth factor-like family member 1 (110 aa).

Residues 1 to 24 form the signal peptide; sequence MAPRGCIVAVFAIFCISRLLCSHG. The N-linked (GlcNAc...) asparagine glycan is linked to N71.

It belongs to the IGFL family. Homodimer; disulfide-linked. In terms of tissue distribution, detected in ovary and spinal cord.

It is found in the secreted. Functionally, probable ligand of the IGFLR1 cell membrane receptor. The sequence is that of Insulin growth factor-like family member 1 (IGFL1) from Homo sapiens (Human).